Consider the following 442-residue polypeptide: Metacaspase-5 (442 aa).

Positions 1–18 (MDLLLGVLSSGILQNALP) are cleaved as a signal peptide. The tract at residues 19-62 (FVAGVGRVKRPKRVKLEEAFREAHLCRPVIPYRAPTPYTGGRVK) is important for catalytic activity. Residues N69 and N112 are each glycosylated (N-linked (GlcNAc...) asparagine). Residue H146 is part of the active site. Ca(2+) is bound by residues D161, D177, and D178. Residue C201 is part of the active site. D208 serves as a coordination point for Ca(2+). 4 N-linked (GlcNAc...) asparagine glycosylation sites follow: N234, N257, N282, and N331. A negatively regulates catalytic activity region spans residues 336-442 (HYVPQQYLQP…QYLSGVGKPL (107 aa)). Positions 348 to 371 (PPQPYYPPPQPQQPYYPPPQPQQP) are enriched in pro residues. The tract at residues 348–442 (PPQPYYPPPQ…QYLSGVGKPL (95 aa)) is disordered. A compositionally biased stretch (low complexity) spans 372 to 382 (YYPSSQLPTQY). The span at 422–434 (PSDQSTYYSSAQY) shows a compositional bias: polar residues.

It belongs to the peptidase C14B family. Post-translationally, in epimastigotes, the unprocessed enzyme appears to be the main form. Auto-processing is dispensable for catalytic activity towards small oligopeptide substrates.

It is found in the recycling endosome. Activated by Ca(2+). Cysteine protease that cleaves specifically after arginine or lysine residues. May play a role in apoptosis. The sequence is that of Metacaspase-5 from Trypanosoma cruzi (strain CL Brener).